Here is a 140-residue protein sequence, read N- to C-terminus: Small ribosomal subunit protein uS12m (140 aa).

Belongs to the universal ribosomal protein uS12 family.

It localises to the mitochondrion. The polypeptide is Small ribosomal subunit protein uS12m (mrps12) (Dictyostelium discoideum (Social amoeba)).